Reading from the N-terminus, the 115-residue chain is Nitrogenase-stabilizing/protective protein NifW (115 aa).

This sequence belongs to the NifW family. As to quaternary structure, homotrimer; associates with NifD.

Its function is as follows. May protect the nitrogenase Fe-Mo protein from oxidative damage. The polypeptide is Nitrogenase-stabilizing/protective protein NifW (Stutzerimonas stutzeri (strain A1501) (Pseudomonas stutzeri)).